Reading from the N-terminus, the 539-residue chain is GMP synthase [glutamine-hydrolyzing] (539 aa).

Residues 4–202 (KILILDFGSQ…VLQIAGAKPD (199 aa)) form the Glutamine amidotransferase type-1 domain. The active-site Nucleophile is the C81. Catalysis depends on residues H176 and E178. In terms of domain architecture, GMPS ATP-PPase spans 203 to 395 (WIMSNHIEEA…LGLPPEMVYR (193 aa)). 230–236 (SGGVDSS) contributes to the ATP binding site.

As to quaternary structure, homodimer.

It carries out the reaction XMP + L-glutamine + ATP + H2O = GMP + L-glutamate + AMP + diphosphate + 2 H(+). It participates in purine metabolism; GMP biosynthesis; GMP from XMP (L-Gln route): step 1/1. Its function is as follows. Catalyzes the synthesis of GMP from XMP. The protein is GMP synthase [glutamine-hydrolyzing] of Burkholderia ambifaria (strain MC40-6).